The primary structure comprises 340 residues: Anthranilate phosphoribosyltransferase (340 aa).

Residues Gly83, 86-87 (GD), Thr91, 93-96 (NVST), 111-119 (KHGNRSVSS), and Ser123 contribute to the 5-phospho-alpha-D-ribose 1-diphosphate site. Gly83 contributes to the anthranilate binding site. Ser95 is a Mg(2+) binding site. Asn114 contributes to the anthranilate binding site. Arg169 is an anthranilate binding site. Mg(2+)-binding residues include Asp228 and Glu229.

The protein belongs to the anthranilate phosphoribosyltransferase family. As to quaternary structure, homodimer. The cofactor is Mg(2+).

The enzyme catalyses N-(5-phospho-beta-D-ribosyl)anthranilate + diphosphate = 5-phospho-alpha-D-ribose 1-diphosphate + anthranilate. Its pathway is amino-acid biosynthesis; L-tryptophan biosynthesis; L-tryptophan from chorismate: step 2/5. Functionally, catalyzes the transfer of the phosphoribosyl group of 5-phosphorylribose-1-pyrophosphate (PRPP) to anthranilate to yield N-(5'-phosphoribosyl)-anthranilate (PRA). This Aquifex aeolicus (strain VF5) protein is Anthranilate phosphoribosyltransferase.